Here is a 1320-residue protein sequence, read N- to C-terminus: Sal-like protein 3 (1320 aa).

The segment covering 1 to 11 (MSRRKQAKPQH) has biased composition (basic residues). Positions 1-49 (MSRRKQAKPQHLKSDEELPPQDGASEHGVPGDGAEDADSGSESRSGSEE) are disordered. Residues 40–49 (GSESRSGSEE) show a composition bias toward low complexity. The C2H2-type 1; atypical zinc-finger motif lies at 51 to 73 (SVCEKCCAEFFKWADFLQHKKTC). Disordered regions lie at residues 84 to 166 (DDEP…AFSM) and 271 to 367 (LSAG…NLPN). Residues 88–100 (APPSEDFPEPSPA) show a composition bias toward pro residues. Phosphoserine is present on S109. The span at 121 to 131 (SEVKAATKEAE) shows a compositional bias: basic and acidic residues. Residues 143-160 (PPGPSVPPPPPALPPQPE) show a composition bias toward pro residues. A compositionally biased stretch (low complexity) spans 271–289 (LSAGPATASAGSGSTLPAA). A compositionally biased stretch (polar residues) spans 295–311 (HLSQPASGTSTPCSTSA). 2 stretches are compositionally biased toward low complexity: residues 323–342 (STGP…GNAV) and 355–367 (PGPL…NLPN). C2H2-type zinc fingers lie at residues 427–449 (HKCR…LRSH) and 455–477 (FKCN…FQRH). The interval 534–623 (GLQLPPTVPG…RTGDAPVVGG (90 aa)) is disordered. The span at 543 to 554 (GTHNYTDSPSIT) shows a compositional bias: polar residues. The span at 555-568 (PVSRSPQRPSPASS) shows a compositional bias: low complexity. The span at 569-583 (ECTSLSPGLNNTESG) shows a compositional bias: polar residues. 3 consecutive C2H2-type zinc fingers follow at residues 692-714 (NQCV…YRTH), 720-742 (FKCK…FGVH), and 752-774 (HSCP…IRMH). Disordered regions lie at residues 807-846 (SSFD…PPSP) and 878-972 (VENG…GHPG). A compositionally biased stretch (acidic residues) spans 809-823 (FDDDIDENSMEEDSE). Composition is skewed to low complexity over residues 834–846 (PLLS…PPSP) and 902–923 (RSAG…PAHS). S932 is modified (phosphoserine). 4 consecutive C2H2-type zinc fingers follow at residues 997–1019 (TVCG…YRSH), 1025–1047 (FVCT…LLTH), 1133–1155 (HNCQ…ERTH), and 1161–1183 (FGCT…MGTH). The residue at position 1197 (S1197) is a Phosphoserine.

Belongs to the sal C2H2-type zinc-finger protein family. In terms of tissue distribution, in adult brain, testis and kidney. In lower levels also in adult ovaries and embryonic stem cells. In embryo in developing neuroectoderm of brain, inner ear and spinal cord. Also weakly and transiently expressed in embryonic branchial arches, notochord, limb buds and heart.

It localises to the nucleus. Functionally, probable transcription factor. This chain is Sal-like protein 3 (Sall3), found in Mus musculus (Mouse).